A 421-amino-acid chain; its full sequence is Glutamyl-tRNA reductase (421 aa).

Substrate-binding positions include 49 to 52 (TCNR), Ser109, 114 to 116 (EPQ), and Gln120. Cys50 functions as the Nucleophile in the catalytic mechanism. 189-194 (GLGQIG) contributes to the NADP(+) binding site.

Belongs to the glutamyl-tRNA reductase family. Homodimer.

It carries out the reaction (S)-4-amino-5-oxopentanoate + tRNA(Glu) + NADP(+) = L-glutamyl-tRNA(Glu) + NADPH + H(+). It participates in porphyrin-containing compound metabolism; protoporphyrin-IX biosynthesis; 5-aminolevulinate from L-glutamyl-tRNA(Glu): step 1/2. In terms of biological role, catalyzes the NADPH-dependent reduction of glutamyl-tRNA(Glu) to glutamate 1-semialdehyde (GSA). This chain is Glutamyl-tRNA reductase, found in Limosilactobacillus reuteri (strain DSM 20016) (Lactobacillus reuteri).